Here is an 843-residue protein sequence, read N- to C-terminus: Eisosome protein 1 (843 aa).

Positions 1–53 (MSLISAVEDRDIHNIGKTSGGGSRTSSITSSKKSLKHGSKSLRKPKVYQTTGE) are disordered. Residue S2 is modified to N-acetylserine. At S2 the chain carries Phosphoserine. The span at 33-46 (KSLKHGSKSLRKPK) shows a compositional bias: basic residues. S88 and S130 each carry phosphoserine. The tract at residues 120 to 174 (KMGPKVVRNNSITSATSKTSKESQTKRKSKESPGAAASKAYSMTMETTSLSSQTN) is disordered. 2 stretches are compositionally biased toward polar residues: residues 127 to 137 (RNNSITSATSK) and 163 to 174 (TMETTSLSSQTN). 4 positions are modified to phosphoserine: S182, S401, S584, and S710. Positions 717–843 (DLPTQLEKIE…QDAISNQEKK (127 aa)) are disordered. A Phosphothreonine modification is found at T720. The segment covering 752 to 764 (STAAKEATETSSA) has biased composition (low complexity). Residues S763 and S775 each carry the phosphoserine modification. Residues 781–797 (SGKEDANDCKSAEHSKE) show a composition bias toward basic and acidic residues. Residues 798 to 810 (ISVSQKAGNNKSL) show a composition bias toward polar residues. A phosphoserine mark is found at S816, S828, S829, and S838.

The protein belongs to the EIS1 family.

The protein localises to the cytoplasmic granule. It localises to the cell membrane. Its function is as follows. Required for normal formation of eisosomes, large cytoplasmic protein assemblies that localize to specialized domains on plasma membrane and mark the site of endocytosis. This Saccharomyces cerevisiae (strain ATCC 204508 / S288c) (Baker's yeast) protein is Eisosome protein 1 (EIS1).